A 501-amino-acid polypeptide reads, in one-letter code: MENQLWHNTVRCCNQYQESPHDAEDILLLLLGLIVLVNIGINVATMMWHGLQNALDKMIDWATQKNEIQASESPPSGPPDKAQDVHIHCILDPVQVKMSRPTQYSSFSCHHFSNHHSSSLLRCVRRRRRRHRRCRRRCCNHQQRPQNYRQIPHSHSVFRNPHRSQKMSQLHRVPFFDQEDPDSYLEEEDNLPFPYPKYPRRGWGGFYQRAGLPSNVGLWGHQGGILASLPPPSLYLSPELRCMPKRVEARSELRLQSYGRHGSQSRLWGNVEAEQWASSPPPPHRLPPNPSWVPVGHSPYPSVGWMLYDSWDQRRRGTEGFERPPASVSRNARPEAQGCREHHSPQSHQQSLLGHAYGQSHRSPHPSTEPLGYSSQDPREVRRRAADWAEALPAWRPLTTSASLTVLDEASHQRTPAPSSVLVPHSSQPWPKVQAADPAPPPTMFVPLSRNPGGNANYQVYDSLELKRQVQKSRARSSSLPPASTSTLRPSLHRSQTEKLN.

The helical transmembrane segment at 26–46 (ILLLLLGLIVLVNIGINVATM) threads the bilayer. Disordered stretches follow at residues 316–384 (RGTE…VRRR) and 409–501 (EASH…EKLN). Residues 476–490 (RSSSLPPASTSTLRP) show a composition bias toward low complexity.

The protein resides in the membrane. This is an uncharacterized protein from Homo sapiens (Human).